We begin with the raw amino-acid sequence, 429 residues long: Glucose-1-phosphate adenylyltransferase (429 aa).

Alpha-D-glucose 1-phosphate-binding positions include glycine 162, 177–178 (EK), and serine 209.

The protein belongs to the bacterial/plant glucose-1-phosphate adenylyltransferase family. In terms of assembly, homotetramer.

It carries out the reaction alpha-D-glucose 1-phosphate + ATP + H(+) = ADP-alpha-D-glucose + diphosphate. The protein operates within glycan biosynthesis; glycogen biosynthesis. Functionally, involved in the biosynthesis of ADP-glucose, a building block required for the elongation reactions to produce glycogen. Catalyzes the reaction between ATP and alpha-D-glucose 1-phosphate (G1P) to produce pyrophosphate and ADP-Glc. The protein is Glucose-1-phosphate adenylyltransferase of Gloeothece citriformis (strain PCC 7424) (Cyanothece sp. (strain PCC 7424)).